A 177-amino-acid polypeptide reads, in one-letter code: Protein Flattop (177 aa).

The disordered stretch occupies residues 113 to 177; the sequence is ILGKPHDPDS…TPGPQRPAKS (65 aa). Residues 115 to 124 are compositionally biased toward basic and acidic residues; sequence GKPHDPDSQK. A compositionally biased stretch (polar residues) spans 132 to 163; that stretch reads TKTVQQARSPTIIPSSPAANLNSPDELQSSHP.

This sequence belongs to the Flattop family. Microtubule inner protein component of sperm flagellar doublet microtubules. Interacts with DLG3. As to expression, expressed in airway epithelial cells.

Its subcellular location is the cytoplasm. The protein resides in the cytoskeleton. The protein localises to the cilium basal body. It is found in the cell projection. It localises to the cilium. Its subcellular location is the apical cell membrane. The protein resides in the cilium axoneme. The protein localises to the flagellum axoneme. In terms of biological role, microtubule inner protein (MIP) part of the dynein-decorated doublet microtubules (DMTs) in cilia axoneme. Acts as a regulator of cilium basal body docking and positioning in mono- and multiciliated cells. Regulates basal body docking and cilia formation in multiciliated lung cells. Regulates kinocilium positioning and stereocilia bundle morphogenesis in the inner ear. This chain is Protein Flattop, found in Homo sapiens (Human).